Here is a 109-residue protein sequence, read N- to C-terminus: Putative transporter-like protein YIL171W (109 aa).

Residues 1–22 (MSGVNNTSANDLSTTESNSNSA) are compositionally biased toward polar residues. The tract at residues 1 to 40 (MSGVNNTSANDLSTTESNSNSAVGAPSVKTEHGDSKDSLN) is disordered. At 1 to 56 (MSGVNNTSANDLSTTESNSNSAVGAPSVKTEHGDSKDSLNLDATEAPIDLPQKPLS) the chain is on the cytoplasmic side. The segment covering 29–39 (KTEHGDSKDSL) has biased composition (basic and acidic residues). A helical membrane pass occupies residues 57–77 (AYTTVAILCLMIAFGGFIFGW). Residues 78 to 109 (DTGTISGFVNLSDFIRRFGQKKTTRGLTTYRK) lie on the Extracellular side of the membrane. Residue Asn87 is glycosylated (N-linked (GlcNAc...) asparagine).

This sequence belongs to the major facilitator superfamily. Sugar transporter (TC 2.A.1.1) family.

It is found in the cell membrane. In terms of biological role, probable glucose transporter. In Saccharomyces cerevisiae (strain ATCC 204508 / S288c) (Baker's yeast), this protein is Putative transporter-like protein YIL171W.